The primary structure comprises 437 residues: GTPase Obg (437 aa).

The Obg domain occupies 2–161; sequence SDFIDRALIT…RELQLELKVI (160 aa). One can recognise an OBG-type G domain in the interval 162-335; that stretch reads ADVGLVGFPN…LQRRIVDILR (174 aa). GTP is bound by residues 168–175, 193–197, 214–217, 284–287, and 316–318; these read GFPNAGKS, FTTLS, DIPG, NKTD, and SAA. 2 residues coordinate Mg(2+): Ser-175 and Thr-195. Positions 355-433 constitute an OCT domain; it reads FSNIDPNDFW…IEKAELLWQD (79 aa).

It belongs to the TRAFAC class OBG-HflX-like GTPase superfamily. OBG GTPase family. In terms of assembly, monomer. Mg(2+) serves as cofactor.

It is found in the cytoplasm. Functionally, an essential GTPase which binds GTP, GDP and possibly (p)ppGpp with moderate affinity, with high nucleotide exchange rates and a fairly low GTP hydrolysis rate. Plays a role in control of the cell cycle, stress response, ribosome biogenesis and in those bacteria that undergo differentiation, in morphogenesis control. The polypeptide is GTPase Obg (Herpetosiphon aurantiacus (strain ATCC 23779 / DSM 785 / 114-95)).